The primary structure comprises 240 residues: 6-phosphogluconolactonase (240 aa).

The protein belongs to the glucosamine/galactosamine-6-phosphate isomerase family. 6-phosphogluconolactonase subfamily.

The catalysed reaction is 6-phospho-D-glucono-1,5-lactone + H2O = 6-phospho-D-gluconate + H(+). The protein operates within carbohydrate degradation; pentose phosphate pathway; D-ribulose 5-phosphate from D-glucose 6-phosphate (oxidative stage): step 2/3. In terms of biological role, hydrolysis of 6-phosphogluconolactone to 6-phosphogluconate. The polypeptide is 6-phosphogluconolactonase (pgl) (Synechocystis sp. (strain ATCC 27184 / PCC 6803 / Kazusa)).